The following is a 150-amino-acid chain: MAYIDPTLLILLVLAGLGIISHNMTVTLAILVLLAIRITPLNSYFPWVEKYGLSIGIVVLTIGVMAPIASGKITASEVMHSFLHWKSLLAILIGVAVSWLGGRGVSLMSNQPSVVAGLLVGTVMGVALFRGVPVGPLIAAGLLSLLIGKT.

Transmembrane regions (helical) follow at residues 1-21 (MAYIDPTLLILLVLAGLGIIS), 51-71 (YGLSIGIVVLTIGVMAPIASG), 82-102 (FLHWKSLLAILIGVAVSWLGG), and 127-147 (ALFRGVPVGPLIAAGLLSLLI).

This sequence belongs to the UPF0756 family.

The protein resides in the cell membrane. The sequence is that of UPF0756 membrane protein ECA1265 from Pectobacterium atrosepticum (strain SCRI 1043 / ATCC BAA-672) (Erwinia carotovora subsp. atroseptica).